Reading from the N-terminus, the 158-residue chain is Glycine/sarcosine/betaine reductase complex component A1 (158 aa).

U44 is an active-site residue. A non-standard amino acid (selenocysteine) is located at residue U44.

It belongs to the GrdA family. In terms of assembly, monomer. Component of the glycine, sarcosine and betaine reductase complexes, together with components B and C.

It catalyses the reaction acetyl phosphate + [thioredoxin]-disulfide + NH4(+) + H2O = [thioredoxin]-dithiol + glycine + phosphate + H(+). It carries out the reaction acetyl phosphate + methylamine + [thioredoxin]-disulfide + H2O = sarcosine + [thioredoxin]-dithiol + phosphate + H(+). The catalysed reaction is acetyl phosphate + trimethylamine + [thioredoxin]-disulfide + H2O = glycine betaine + [thioredoxin]-dithiol + phosphate + H(+). In the first step of glycine, betaine and sarcosine reductases, the substrate is bound to component PB via a Schiff base intermediate. Then the PB-activated substrate is nucleophilically attacked by the selenol anion of component PA to transform it to a carboxymethylated selenoether and the respective amine. By action of component PC, acetyl phosphate is formed, leaving component PA in its oxidized state. Finally component PA becomes reduced by the thioredoxin system to start a new catalytic cycle of reductive deamination. This chain is Glycine/sarcosine/betaine reductase complex component A1 (grdA1), found in Peptoclostridium acidaminophilum (Eubacterium acidaminophilum).